The chain runs to 218 residues: Pyridoxine/pyridoxamine 5'-phosphate oxidase (218 aa).

Residues 14-17 (RREY) and Lys-72 each bind substrate. FMN contacts are provided by residues 67 to 72 (RIVLLK), 82 to 83 (YT), Arg-88, Lys-89, and Gln-111. The substrate site is built by Tyr-129, Arg-133, and Ser-137. FMN contacts are provided by residues 146–147 (QS) and Trp-191. 197–199 (RLH) serves as a coordination point for substrate. Position 201 (Arg-201) interacts with FMN.

It belongs to the pyridoxamine 5'-phosphate oxidase family. As to quaternary structure, homodimer. FMN is required as a cofactor.

The catalysed reaction is pyridoxamine 5'-phosphate + O2 + H2O = pyridoxal 5'-phosphate + H2O2 + NH4(+). It catalyses the reaction pyridoxine 5'-phosphate + O2 = pyridoxal 5'-phosphate + H2O2. Its pathway is cofactor metabolism; pyridoxal 5'-phosphate salvage; pyridoxal 5'-phosphate from pyridoxamine 5'-phosphate: step 1/1. It participates in cofactor metabolism; pyridoxal 5'-phosphate salvage; pyridoxal 5'-phosphate from pyridoxine 5'-phosphate: step 1/1. Catalyzes the oxidation of either pyridoxine 5'-phosphate (PNP) or pyridoxamine 5'-phosphate (PMP) into pyridoxal 5'-phosphate (PLP). This chain is Pyridoxine/pyridoxamine 5'-phosphate oxidase, found in Escherichia coli O127:H6 (strain E2348/69 / EPEC).